Reading from the N-terminus, the 872-residue chain is Probable GPI-anchored adhesin-like protein PGA25 (872 aa).

The signal sequence occupies residues 1-19 (MKVTAVSSVLLTVAALTNA). Residues 43-65 (PAAAPAAQPAAQPTTQSPADQPT) show a composition bias toward low complexity. Disordered regions lie at residues 43 to 383 (PAAA…TIIP), 492 to 517 (KPTG…DETD), and 623 to 809 (PDDW…ECDT). The segment covering 66–83 (VQSPVSSDQPSTAQPVAQ) has biased composition (polar residues). Low complexity-rich tracts occupy residues 84–110 (NNLL…TRST) and 125–171 (SSEA…SSSS). N-linked (GlcNAc...) asparagine glycosylation occurs at N92. Over residues 196 to 207 (ETDDEDCVEETE) the composition is skewed to acidic residues. Composition is skewed to low complexity over residues 208 to 225 (SPTS…VATT), 242 to 260 (SSAP…SSTT), and 274 to 293 (SSVP…NTTT). N290 is a glycosylation site (N-linked (GlcNAc...) asparagine). Residues 317 to 328 (AEEDDEECEDPT) show a composition bias toward acidic residues. A compositionally biased stretch (low complexity) spans 349–363 (TSQSKTSVSSVVSKS). The span at 366 to 376 (EDDDDETECET) shows a compositional bias: acidic residues. Residues 495-506 (GSGSITVLPTKS) are compositionally biased toward polar residues. 2 stretches are compositionally biased toward acidic residues: residues 624–635 (DDWEDDGYEGED) and 646–659 (DDGE…DDGE). Gly residues-rich tracts occupy residues 666–692 (SSSG…GSGS), 701–710 (SSGGTWGGSG), and 731–740 (SWWGGSGSGS). Residues 741-760 (SSGSSSGVSSGDSGSSSVTG) show a composition bias toward low complexity. The span at 761 to 771 (GSSGSWWGGSG) shows a compositional bias: gly residues. Acidic residues predominate over residues 780–808 (DGYDDEDDQTPEPECDDEDDSWDDDEECD). A lipid anchor (GPI-anchor amidated alanine) is attached at A845. Positions 846 to 872 (QSVTQIENIGGKVSASGLFVVLGLLLI) are cleaved as a propeptide — removed in mature form.

This sequence belongs to the HYR1/IFF family. The GPI-anchor is attached to the protein in the endoplasmic reticulum and serves to target the protein to the cell surface. There, the glucosamine-inositol phospholipid moiety is cleaved off and the GPI-modified mannoprotein is covalently attached via its lipidless GPI glycan remnant to the 1,6-beta-glucan of the outer cell wall layer.

The protein localises to the secreted. It is found in the cell wall. Its subcellular location is the membrane. Functionally, probable GPI-anchored cell wall protein involved in cell wall organization, hyphal growth, as well as in host-fungal interaction and virulence. The protein is Probable GPI-anchored adhesin-like protein PGA25 (PGA25) of Candida albicans (strain SC5314 / ATCC MYA-2876) (Yeast).